The sequence spans 815 residues: DNA topoisomerase 1 (815 aa).

A Toprim domain is found at 3–119 (KHLLIVESPA…QRIVFTEITP (117 aa)). Glu9 and Asp82 together coordinate Mg(2+). A Topo IA-type catalytic domain is found at 133-573 (ASDLVDAQQA…KFWVPFKELV (441 aa)). Residues 167–172 (SAGRVQ) form an interaction with DNA region. Tyr308 (O-(5'-phospho-DNA)-tyrosine intermediate) is an active-site residue. A disordered region spans residues 760 to 815 (GKPARKNFSTKKTATKNETRKQTTKKRTTDAKATKKVSDKPVKKQIKKRIAPNITE). Positions 774–801 (TKNETRKQTTKKRTTDAKATKKVSDKPV) are enriched in basic and acidic residues.

Belongs to the type IA topoisomerase family. Monomer. It depends on Mg(2+) as a cofactor.

The catalysed reaction is ATP-independent breakage of single-stranded DNA, followed by passage and rejoining.. Functionally, releases the supercoiling and torsional tension of DNA, which is introduced during the DNA replication and transcription, by transiently cleaving and rejoining one strand of the DNA duplex. Introduces a single-strand break via transesterification at a target site in duplex DNA. The scissile phosphodiester is attacked by the catalytic tyrosine of the enzyme, resulting in the formation of a DNA-(5'-phosphotyrosyl)-enzyme intermediate and the expulsion of a 3'-OH DNA strand. The free DNA strand then undergoes passage around the unbroken strand, thus removing DNA supercoils. Finally, in the religation step, the DNA 3'-OH attacks the covalent intermediate to expel the active-site tyrosine and restore the DNA phosphodiester backbone. This Xylella fastidiosa (strain 9a5c) protein is DNA topoisomerase 1.